The following is a 239-amino-acid chain: Ubiquinone biosynthesis O-methyltransferase (239 aa).

S-adenosyl-L-methionine is bound by residues R45, G64, D85, and M129.

It belongs to the methyltransferase superfamily. UbiG/COQ3 family.

The enzyme catalyses a 3-demethylubiquinol + S-adenosyl-L-methionine = a ubiquinol + S-adenosyl-L-homocysteine + H(+). The catalysed reaction is a 3-(all-trans-polyprenyl)benzene-1,2-diol + S-adenosyl-L-methionine = a 2-methoxy-6-(all-trans-polyprenyl)phenol + S-adenosyl-L-homocysteine + H(+). The protein operates within cofactor biosynthesis; ubiquinone biosynthesis. O-methyltransferase that catalyzes the 2 O-methylation steps in the ubiquinone biosynthetic pathway. The chain is Ubiquinone biosynthesis O-methyltransferase from Nitrosospira multiformis (strain ATCC 25196 / NCIMB 11849 / C 71).